An 81-amino-acid chain; its full sequence is uncharacterized protein (81 aa).

This is an uncharacterized protein from Caenorhabditis elegans.